Reading from the N-terminus, the 340-residue chain is Protein FAM50A-A (340 aa).

Disordered regions lie at residues 1–22 (MAQY…KKRE) and 123–178 (NLEE…EEEN). Acidic residues predominate over residues 124–146 (LEEDEECEDEEGEEEESDKEDPP). Basic and acidic residues predominate over residues 169-178 (PDRDREEEEN).

Its subcellular location is the nucleus. Functionally, probably involved in the regulation of pre-mRNA splicing. The sequence is that of Protein FAM50A-A (fam50a-a) from Xenopus laevis (African clawed frog).